The chain runs to 511 residues: MKCLLYLAFLFIGVNCKFTIVFPHNQKGNWKNVPSNYHYCPSSSDLNWHNDLIGTAIQVKMPKSHKAIQADGWMCHASKWVTTCDFRWYGPKYITQSIRSFTPSVEQCKESIEQTKQGTWLNPGFPPQSCGYATVTDAEAVIVQVTPHHVLVDEYTGEWVDSQFINGKCSNYICPTVHNSTTWHSDYKVKGLCDSNLISMDITFFSEDGELSSLGKEGTGFRSNYFAYETGGKACKMQYCKHWGVRLPSGVWFEMADKDLFAAARFPECPEGSSISAPSQTSVDVSLIQDVERILDYSLCQETWSKIRAGLPISPVDLSYLAPKNPGTGPAFTIINGTLKYFETRYIRVDIAAPILSRMVGMISGTTTERELWDDWAPYEDVEIGPNGVLRTSSGYKFPLYMIGHGMLDSDLHLSSKAQVFEHPHIQDAASQLPDDESLFFGDTGLSKNPIELVEGWFSSWKSSIASFFFIIGLIIGLFLVLRVGIHLCIKLKHTKKRQIYTDIEMNRLGK.

An N-terminal signal peptide occupies residues 1–16 (MKCLLYLAFLFIGVNC). Residues 17–467 (KFTIVFPHNQ…FSSWKSSIAS (451 aa)) lie on the Virion surface side of the membrane. The interval 18–35 (FTIVFPHNQKGNWKNVPS) is trimerization. 6 disulfides stabilise this stretch: Cys-40-Cys-300, Cys-75-Cys-108, Cys-84-Cys-130, Cys-169-Cys-174, Cys-193-Cys-240, and Cys-235-Cys-269. The segment at 53 to 172 (IGTAIQVKMP…QFINGKCSNY (120 aa)) is fusion peptide. N-linked (GlcNAc...) asparagine; by host glycosylation is present at Asn-179. The segment at 259–309 (DLFAAARFPECPEGSSISAPSQTSVDVSLIQDVERILDYSLCQETWSKIRA) is trimerization. N-linked (GlcNAc...) asparagine; by host glycosylation occurs at Asn-336. Residues 383–405 (EIGPNGVLRTSSGYKFPLYMIGH) form a trimerization region. The helical transmembrane segment at 468–488 (FFFIIGLIIGLFLVLRVGIHL) threads the bilayer. Cys-489 is lipidated: S-palmitoyl cysteine; by host. The Intravirion segment spans residues 489–511 (CIKLKHTKKRQIYTDIEMNRLGK). Residues 496 to 506 (KKRQIYTDIEM) carry the basolateral targeting ex vivo motif.

This sequence belongs to the vesiculovirus glycoprotein family. Homotrimer. Interacts with host LDL at target cell surface. In terms of processing, glycosylated by host. Palmitoylated by host.

The protein resides in the virion membrane. It is found in the host membrane. Its function is as follows. Attaches the virus to host LDL receptors, inducing clathrin-dependent endocytosis of the virion. In the endosome, the acidic pH induces conformational changes in the glycoprotein trimer, which trigger fusion between virus and endosomal membrane. The protein is Glycoprotein (G) of Aedes (Bovine).